The chain runs to 394 residues: MSLQGIQLSDLSYKHAILKESQYTIKRDVGTTPAVTPSSLQREVSLLCGEILYAKHTDYSHAAEVGMQYVSTTLGAERTQQILKNSGSEVQAVLTKTYSLGKGKNSKGEELQMLDIHGVEKSWVEEVDKEARKTMASATKDNSGPIPQNQRPSSPDAPIILLCIGALIFTKPASTIEVGLETAVRRANRVLNDALKRFPRIDIPKIARSFYDLFEQKVYYRSLFIEYGKALGSSSTGSKAESLFVNIFMQAYGAGQTMLRWGAIARSSNNIMLGHVSVQAELKQVTEVYDLVREMGPESGLLHLRQSPKAGLLSLANCPNFASVVLGNASGLGILGMYRGRVPNTELFAAAESYARSLKESNKINFSSLGLTEEEKEAAENFLNINEEGQNDYE.

The segment at 131–153 is disordered; sequence ARKTMASATKDNSGPIPQNQRPS. The segment covering 136-153 has biased composition (polar residues); sequence ASATKDNSGPIPQNQRPS.

The protein belongs to the paramyxoviruses nucleocapsid family. As to quaternary structure, homomultimerizes to form the nucleocapsid. Binds to viral genomic RNA. Interacts with the phosphoprotein P. When in a monomeric RNA-free form, interacts with the phosphoprotein (via N-terminus). Interacts with protein M2-1; this interaction allows the association of nucleocapsid with the matrix protein.

The protein localises to the virion. It localises to the host cytoplasm. In terms of biological role, encapsidates the viral RNA genome by forming a left-handed helical nucleocapsid that protects the RNA from nucleases. RNA replication depends on the availability of soluble nucleoprotein. The encapsidated genomic RNA is termed the NC and serves as template for transcription and replication. In Avian metapneumovirus (isolate Canada goose/Minnesota/15a/2001) (AMPV), this protein is Nucleoprotein (N).